We begin with the raw amino-acid sequence, 284 residues long: Tropomyosin alpha-1 chain (284 aa).

Residues 1-40 form a disordered region; sequence MDAIKKKMQMLKLDKENALDRAEQAEADKKGAEDKSKQLE. A coiled-coil region spans residues 1 to 284; sequence MDAIKKKMQM…DHALNDMTSI (284 aa). The segment covering 12-40 has biased composition (basic and acidic residues); sequence KLDKENALDRAEQAEADKKGAEDKSKQLE.

This sequence belongs to the tropomyosin family. As to quaternary structure, homodimer. Heterodimer of an alpha (TPM1, TPM3 or TPM4) and a beta (TPM2) chain.

It is found in the cytoplasm. The protein localises to the cytoskeleton. Binds to actin filaments in muscle and non-muscle cells. Plays a central role, in association with the troponin complex, in the calcium dependent regulation of vertebrate striated muscle contraction. Smooth muscle contraction is regulated by interaction with caldesmon. In non-muscle cells is implicated in stabilizing cytoskeleton actin filaments. The sequence is that of Tropomyosin alpha-1 chain (tpm1) from Rana temporaria (European common frog).